Reading from the N-terminus, the 186-residue chain is Oligoribonuclease (186 aa).

The Exonuclease domain maps to 12-175; sequence LIWIDLEMTG…DDIKDSIKEL (164 aa). Tyr133 is a catalytic residue.

It belongs to the oligoribonuclease family.

The protein localises to the cytoplasm. In terms of biological role, 3'-to-5' exoribonuclease specific for small oligoribonucleotides. The protein is Oligoribonuclease of Wigglesworthia glossinidia brevipalpis.